Consider the following 66-residue polypeptide: Spore coat protein C (66 aa).

This sequence to B.subtilis protein YnzH.

The polypeptide is Spore coat protein C (cotC) (Bacillus subtilis (strain 168)).